Reading from the N-terminus, the 329-residue chain is 4-hydroxythreonine-4-phosphate dehydrogenase (329 aa).

Substrate contacts are provided by H136 and T137. A divalent metal cation contacts are provided by H166, H211, and H266. 3 residues coordinate substrate: K274, N283, and R292.

Belongs to the PdxA family. As to quaternary structure, homodimer. Requires Zn(2+) as cofactor. Mg(2+) serves as cofactor. The cofactor is Co(2+).

The protein localises to the cytoplasm. It catalyses the reaction 4-(phosphooxy)-L-threonine + NAD(+) = 3-amino-2-oxopropyl phosphate + CO2 + NADH. It participates in cofactor biosynthesis; pyridoxine 5'-phosphate biosynthesis; pyridoxine 5'-phosphate from D-erythrose 4-phosphate: step 4/5. Functionally, catalyzes the NAD(P)-dependent oxidation of 4-(phosphooxy)-L-threonine (HTP) into 2-amino-3-oxo-4-(phosphooxy)butyric acid which spontaneously decarboxylates to form 3-amino-2-oxopropyl phosphate (AHAP). The sequence is that of 4-hydroxythreonine-4-phosphate dehydrogenase from Escherichia coli O6:H1 (strain CFT073 / ATCC 700928 / UPEC).